We begin with the raw amino-acid sequence, 752 residues long: MAP/microtubule affinity-regulating kinase 4 (752 aa).

A disordered region spans residues 1-36 (MSSRTVLAPGNDRNSDTHGTLGSGRSSDKGPSWSSR). The region spanning 59-310 (YRLLRTIGKG…LEQIMKDKWI (252 aa)) is the Protein kinase domain. ATP contacts are provided by residues 65–73 (IGKGNFAKV) and K88. The active-site Proton acceptor is D181. T214 carries the post-translational modification Phosphothreonine; by LKB1. Positions 324-368 (EPEEDFGDTKRIEVMVGMGYTREEIKESLTSQKYNEVTATYLLLG) constitute a UBA domain. The disordered stretch occupies residues 385–614 (ARVRAPSDTT…PAGRPRPTTN (230 aa)). The span at 391–406 (SDTTNGTSSSKGTSHS) shows a compositional bias: low complexity. A phosphoserine mark is found at S423 and S543. Residues 544-553 (PSSHSLAPPS) show a composition bias toward low complexity. A KA1 domain is found at 703 to 752 (AGGPEPLSHFEVEVCQLPRPGLRGVLFRRVAGTALAFRTLVTRISNDLEL).

Belongs to the protein kinase superfamily. CAMK Ser/Thr protein kinase family. SNF1 subfamily. Interacts with MAPT/TAU. Interacts with gamma-tubulin. Interacts with ODF2. Interacts with USP9X. Interacts with YWHAQ. Interacts with NLRP3; promoting NLRP3 recruitment to microtubule organizing center (MTOC). Mg(2+) is required as a cofactor. Post-translationally, ubiquitinated with 'Lys-29'- and 'Lys-33'-linked polyubiquitins which appear to impede LKB1-mediated phosphorylation. Deubiquitinated by USP9X. In terms of processing, phosphorylated at Thr-214 by STK11/LKB1 in complex with STE20-related adapter-alpha (STRADA) pseudo kinase and CAB39. Phosphorylated throughout the cell cycle. Ubiquitous. Isoform 2 is brain-specific. Expressed at highest levels in brain and testis. Also expressed in heart, lung, liver, muscle, kidney and spleen.

The protein resides in the cytoplasm. It is found in the cytoskeleton. Its subcellular location is the microtubule organizing center. The protein localises to the centrosome. It localises to the cilium basal body. The protein resides in the cilium axoneme. It is found in the cell projection. Its subcellular location is the dendrite. The enzyme catalyses L-seryl-[protein] + ATP = O-phospho-L-seryl-[protein] + ADP + H(+). The catalysed reaction is L-threonyl-[protein] + ATP = O-phospho-L-threonyl-[protein] + ADP + H(+). Activated by phosphorylation on Thr-214. In terms of biological role, serine/threonine-protein kinase. Phosphorylates the microtubule-associated protein MAPT/TAU. Also phosphorylates the microtubule-associated proteins MAP2 and MAP4. Involved in regulation of the microtubule network, causing reorganization of microtubules into bundles. Required for the initiation of axoneme extension during cilium assembly. Regulates the centrosomal location of ODF2 and phosphorylates ODF2 in vitro. Plays a role in cell cycle progression, specifically in the G1/S checkpoint. Reduces neuronal cell survival. Plays a role in energy homeostasis by regulating satiety and metabolic rate. Promotes adipogenesis by activating JNK1 and inhibiting the p38MAPK pathway, and triggers apoptosis by activating the JNK1 pathway. Phosphorylates mTORC1 complex member RPTOR and acts as a negative regulator of the mTORC1 complex, probably due to disruption of the interaction between phosphorylated RPTOR and the RRAGA/RRAGC heterodimer which is required for mTORC1 activation. Involved in NLRP3 positioning along microtubules by mediating NLRP3 recruitment to microtubule organizing center (MTOC) upon inflammasome activation. The chain is MAP/microtubule affinity-regulating kinase 4 from Homo sapiens (Human).